A 268-amino-acid chain; its full sequence is Interleukin-1 beta (268 aa).

Positions Met1–Asp116 are excised as a propeptide.

It belongs to the IL-1 family. Monomer. In its precursor form, weakly interacts with full-length MEFV; the mature cytokine does not interact at all. Interacts with integrins ITGAV:ITGBV and ITGA5:ITGB1; integrin-binding is required for IL1B signaling. Interacts with cargo receptor TMED10; the interaction is direct and is required for the secretion of IL1B mature form. Interacts with HSP90AB1; the interaction facilitates cargo translocation into the ERGIC. Interacts with HSP90B1; the interaction facilitates cargo translocation into the ERGIC.

It is found in the cytoplasm. The protein resides in the cytosol. It localises to the secreted. Its subcellular location is the lysosome. The protein localises to the extracellular exosome. Its function is as follows. Potent pro-inflammatory cytokine. Initially discovered as the major endogenous pyrogen, induces prostaglandin synthesis, neutrophil influx and activation, T-cell activation and cytokine production, B-cell activation and antibody production, and fibroblast proliferation and collagen production. Promotes Th17 differentiation of T-cells. Synergizes with IL12/interleukin-12 to induce IFNG synthesis from T-helper 1 (Th1) cells. Plays a role in angiogenesis by inducing VEGF production synergistically with TNF and IL6. Involved in transduction of inflammation downstream of pyroptosis: its mature form is specifically released in the extracellular milieu by passing through the gasdermin-D (GSDMD) pore. This chain is Interleukin-1 beta, found in Rattus norvegicus (Rat).